A 130-amino-acid polypeptide reads, in one-letter code: Small ribosomal subunit protein uS8 (130 aa).

This sequence belongs to the universal ribosomal protein uS8 family.

In Agaricus bisporus (White button mushroom), this protein is Small ribosomal subunit protein uS8 (rps22).